The sequence spans 210 residues: Hydrogenase expression/formation protein HupD (210 aa).

Positions 22, 68, and 99 each coordinate Ni(2+).

Belongs to the peptidase A31 family.

Its function is as follows. Not known. Could be involved in the processing of hydrogenase. This Rhodobacter capsulatus (Rhodopseudomonas capsulata) protein is Hydrogenase expression/formation protein HupD (hupD).